We begin with the raw amino-acid sequence, 154 residues long: Myoglobin (154 aa).

The Globin domain maps to 2–148 (GLSDGEWQLV…FRNDIAAKYK (147 aa)). At Ser4 the chain carries Phosphoserine. His65 contacts nitrite. O2 is bound at residue His65. At Thr68 the chain carries Phosphothreonine. His94 contributes to the heme b binding site.

This sequence belongs to the globin family. In terms of assembly, monomeric.

It is found in the cytoplasm. The protein resides in the sarcoplasm. It carries out the reaction Fe(III)-heme b-[protein] + nitric oxide + H2O = Fe(II)-heme b-[protein] + nitrite + 2 H(+). It catalyses the reaction H2O2 + AH2 = A + 2 H2O. In terms of biological role, monomeric heme protein which primary function is to store oxygen and facilitate its diffusion within muscle tissues. Reversibly binds oxygen through a pentacoordinated heme iron and enables its timely and efficient release as needed during periods of heightened demand. Depending on the oxidative conditions of tissues and cells, and in addition to its ability to bind oxygen, it also has a nitrite reductase activity whereby it regulates the production of bioactive nitric oxide. Under stress conditions, like hypoxia and anoxia, it also protects cells against reactive oxygen species thanks to its pseudoperoxidase activity. This chain is Myoglobin (MB), found in Ondatra zibethicus (Muskrat).